The following is a 203-amino-acid chain: uncharacterized protein (203 aa).

This sequence belongs to the mimivirus L332/L333/L334 family.

This is an uncharacterized protein from Acanthamoeba polyphaga mimivirus (APMV).